The primary structure comprises 202 residues: LexA repressor 2 (202 aa).

The H-T-H motif DNA-binding region spans 28-48 (LADIATRFGFASRSVARKHIT). Active-site for autocatalytic cleavage activity residues include Ser123 and Lys160.

This sequence belongs to the peptidase S24 family. In terms of assembly, homodimer.

It catalyses the reaction Hydrolysis of Ala-|-Gly bond in repressor LexA.. Functionally, represses a number of genes involved in the response to DNA damage (SOS response), including recA and lexA. In the presence of single-stranded DNA, RecA interacts with LexA causing an autocatalytic cleavage which disrupts the DNA-binding part of LexA, leading to derepression of the SOS regulon and eventually DNA repair. The polypeptide is LexA repressor 2 (Pseudomonas putida (strain ATCC 47054 / DSM 6125 / CFBP 8728 / NCIMB 11950 / KT2440)).